Here is a 313-residue protein sequence, read N- to C-terminus: Ribosomal RNA small subunit methyltransferase I (313 aa).

Residues Met-1–Arg-23 form a disordered region.

Belongs to the methyltransferase superfamily. RsmI family.

The protein localises to the cytoplasm. It catalyses the reaction cytidine(1402) in 16S rRNA + S-adenosyl-L-methionine = 2'-O-methylcytidine(1402) in 16S rRNA + S-adenosyl-L-homocysteine + H(+). Catalyzes the 2'-O-methylation of the ribose of cytidine 1402 (C1402) in 16S rRNA. This chain is Ribosomal RNA small subunit methyltransferase I, found in Micromonospora olivasterospora.